Here is a 341-residue protein sequence, read N- to C-terminus: D-aspartate oxidase (341 aa).

FAD is bound by residues Asp36, Lys37, Thr43, Ser44, Met50, Gly307, Ile311, and Ser312. The Microbody targeting signal signature appears at 339–341 (SNL).

The protein belongs to the DAMOX/DASOX family. In terms of assembly, monomer. Interacts with PEX5; the interaction is direct and required for localization of DDO to the peroxisome. Interacts with DAOA; the interaction is direct and increases the degradation rate of DDO. FAD is required as a cofactor. Post-translationally, may be S-nitrosylated. As to expression, expressed in epithelial cells of the proximal nephron tubules in the renal cortex (at protein level). In the brain, expressed in the frontal, temporal, and occipital lobes of the cortex, hippocampus, striatum, diencephalon, brainstem, cerebellum, spinal cord, plexus choroiderus and ependyma (at protein level). Expression is increased in the prefrontal cortex of schizophrenic patients. Levels are normal in the superior frontal gyrus of patients with Alzheimer's disease.

It localises to the peroxisome matrix. The protein resides in the cytoplasm. The protein localises to the cytosol. It carries out the reaction D-aspartate + O2 + H2O = oxaloacetate + H2O2 + NH4(+). The enzyme catalyses D-glutamate + O2 + H2O = H2O2 + 2-oxoglutarate + NH4(+). Its activity is regulated as follows. Inhibited by the benzodiazepine olanzapine. Inhibited by aminooxyacetic acid, thiolactomycin, malonate and meso-tartrate. Clozapine, haloperidol and chlorpromazine have no effect on activity. Not inhibited by sodium, potassium, magnesium, iron, calcium, cobalt, copper, nickel, manganese or zinc ions. Not inhibited by AMP, ADP, ATP, or cAMP. Not inhibited by pyridoxal 5'-phosphate. Its function is as follows. Selectively catalyzes the oxidative deamination of acidic amino acids. Suppresses the level of D-aspartate in the brain, an amino acid that can act as an agonist for glutamate receptors. Protects the organism from the toxicity of D-amino acids. May also function in the intestine. The polypeptide is D-aspartate oxidase (DDO) (Homo sapiens (Human)).